We begin with the raw amino-acid sequence, 235 residues long: Ribonuclease PH (235 aa).

Residues Arg86 and 124 to 126 (GTR) each bind phosphate.

It belongs to the RNase PH family. Homohexameric ring arranged as a trimer of dimers.

It carries out the reaction tRNA(n+1) + phosphate = tRNA(n) + a ribonucleoside 5'-diphosphate. In terms of biological role, phosphorolytic 3'-5' exoribonuclease that plays an important role in tRNA 3'-end maturation. Removes nucleotide residues following the 3'-CCA terminus of tRNAs; can also add nucleotides to the ends of RNA molecules by using nucleoside diphosphates as substrates, but this may not be physiologically important. Probably plays a role in initiation of 16S rRNA degradation (leading to ribosome degradation) during starvation. The sequence is that of Ribonuclease PH from Francisella tularensis subsp. mediasiatica (strain FSC147).